A 299-amino-acid chain; its full sequence is Cuticle collagen 34 (299 aa).

Positions 105-282 (PGPAGTPGKP…GSPGERGICP (178 aa)) are disordered. Over residues 129–162 (PGRPPQQPCEPITPPPCKPCPQGPPGPPGPPGPP) the composition is skewed to pro residues. A compositionally biased stretch (low complexity) spans 164 to 181 (DSGEPGSPGLPGQDAAPG). Pro residues-rich tracts occupy residues 182-195 (EPGP…PGAP) and 215-233 (PGEP…PGSP). The interval 216–278 (GEPGPPGEAG…AGPPGSPGER (63 aa)) is triple-helical region. Residues 251 to 263 (NGPDGQPGADGNP) are compositionally biased toward low complexity. A compositionally biased stretch (pro residues) spans 265–274 (APGPAGPPGS).

This sequence belongs to the cuticular collagen family. As to quaternary structure, collagen polypeptide chains are complexed within the cuticle by disulfide bonds and other types of covalent cross-links.

Functionally, nematode cuticles are composed largely of collagen-like proteins. The cuticle functions both as an exoskeleton and as a barrier to protect the worm from its environment. The polypeptide is Cuticle collagen 34 (col-34) (Caenorhabditis elegans).